A 199-amino-acid chain; its full sequence is Protein GrpE (199 aa).

A compositionally biased stretch (polar residues) spans M1–Q17. The interval M1–F36 is disordered.

The protein belongs to the GrpE family. Homodimer.

The protein localises to the cytoplasm. Participates actively in the response to hyperosmotic and heat shock by preventing the aggregation of stress-denatured proteins, in association with DnaK and GrpE. It is the nucleotide exchange factor for DnaK and may function as a thermosensor. Unfolded proteins bind initially to DnaJ; upon interaction with the DnaJ-bound protein, DnaK hydrolyzes its bound ATP, resulting in the formation of a stable complex. GrpE releases ADP from DnaK; ATP binding to DnaK triggers the release of the substrate protein, thus completing the reaction cycle. Several rounds of ATP-dependent interactions between DnaJ, DnaK and GrpE are required for fully efficient folding. This Ehrlichia canis (strain Jake) protein is Protein GrpE.